The following is a 390-amino-acid chain: Delta-aminolevulinic acid dehydratase, chloroplastic (390 aa).

The transit peptide at 1–24 (MQMMQRNVVGQRPVAGSRRSLVVA) directs the protein to the chloroplast. The disordered stretch occupies residues 34–69 (VSTNGKHRTGVPEGTPIVTPQDLPSRPRRNRRSESF). Lys-251 functions as the Schiff-base intermediate with substrate in the catalytic mechanism. Arg-261 and Lys-281 together coordinate 5-aminolevulinate. A Mg(2+)-binding site is contributed by Glu-297. Lys-312 acts as the Schiff-base intermediate with substrate in catalysis. Residues Ser-338 and Tyr-377 each contribute to the 5-aminolevulinate site.

This sequence belongs to the ALAD family. In terms of assembly, homooctamer. Mg(2+) serves as cofactor.

It is found in the plastid. Its subcellular location is the chloroplast. The enzyme catalyses 2 5-aminolevulinate = porphobilinogen + 2 H2O + H(+). It functions in the pathway porphyrin-containing compound metabolism; protoporphyrin-IX biosynthesis; coproporphyrinogen-III from 5-aminolevulinate: step 1/4. Its function is as follows. Catalyzes an early step in the biosynthesis of tetrapyrroles. Binds two molecules of 5-aminolevulinate per subunit, each at a distinct site, and catalyzes their condensation to form porphobilinogen. The polypeptide is Delta-aminolevulinic acid dehydratase, chloroplastic (HEMB) (Chlamydomonas reinhardtii (Chlamydomonas smithii)).